A 572-amino-acid chain; its full sequence is Proline--tRNA ligase (572 aa).

Belongs to the class-II aminoacyl-tRNA synthetase family. ProS type 1 subfamily. As to quaternary structure, homodimer.

It is found in the cytoplasm. The catalysed reaction is tRNA(Pro) + L-proline + ATP = L-prolyl-tRNA(Pro) + AMP + diphosphate. Its function is as follows. Catalyzes the attachment of proline to tRNA(Pro) in a two-step reaction: proline is first activated by ATP to form Pro-AMP and then transferred to the acceptor end of tRNA(Pro). As ProRS can inadvertently accommodate and process non-cognate amino acids such as alanine and cysteine, to avoid such errors it has two additional distinct editing activities against alanine. One activity is designated as 'pretransfer' editing and involves the tRNA(Pro)-independent hydrolysis of activated Ala-AMP. The other activity is designated 'posttransfer' editing and involves deacylation of mischarged Ala-tRNA(Pro). The misacylated Cys-tRNA(Pro) is not edited by ProRS. In Pectobacterium atrosepticum (strain SCRI 1043 / ATCC BAA-672) (Erwinia carotovora subsp. atroseptica), this protein is Proline--tRNA ligase.